The primary structure comprises 344 residues: Heat-inducible transcription repressor HrcA (344 aa).

It belongs to the HrcA family.

In terms of biological role, negative regulator of class I heat shock genes (grpE-dnaK-dnaJ and groELS operons). Prevents heat-shock induction of these operons. The sequence is that of Heat-inducible transcription repressor HrcA from Streptococcus pneumoniae serotype 19F (strain G54).